A 113-amino-acid polypeptide reads, in one-letter code: CRISPR-associated endoribonuclease Cas2 2 (113 aa).

Asp32 lines the Mg(2+) pocket.

It belongs to the CRISPR-associated endoribonuclease Cas2 protein family. In terms of assembly, homodimer, forms a heterotetramer with a Cas1 homodimer. The cofactor is Mg(2+).

CRISPR (clustered regularly interspaced short palindromic repeat), is an adaptive immune system that provides protection against mobile genetic elements (viruses, transposable elements and conjugative plasmids). CRISPR clusters contain sequences complementary to antecedent mobile elements and target invading nucleic acids. CRISPR clusters are transcribed and processed into CRISPR RNA (crRNA). Functions as a ssRNA-specific endoribonuclease. Involved in the integration of spacer DNA into the CRISPR cassette. This is CRISPR-associated endoribonuclease Cas2 2 (cas22) from Nitrosomonas europaea (strain ATCC 19718 / CIP 103999 / KCTC 2705 / NBRC 14298).